The following is a 478-amino-acid chain: Siroheme synthase (478 aa).

Positions 1–207 are precorrin-2 dehydrogenase /sirohydrochlorin ferrochelatase; it reads MTANVLFPLF…QRHAEAEAVL (207 aa). NAD(+)-binding positions include 25–26 and 46–47; these read KV and PS. Ser-132 is modified (phosphoserine). The interval 220–478 is uroporphyrinogen-III C-methyltransferase; sequence GSVTLVGAGA…PCPPRTHPIS (259 aa). Asp-252 (proton acceptor) is an active-site residue. Lys-274 serves as the catalytic Proton donor. Residues 305-307, Val-310, 335-336, Met-387, and Gly-416 contribute to the S-adenosyl-L-methionine site; these read GGD and TA.

This sequence in the N-terminal section; belongs to the precorrin-2 dehydrogenase / sirohydrochlorin ferrochelatase family. In the C-terminal section; belongs to the precorrin methyltransferase family.

The enzyme catalyses uroporphyrinogen III + 2 S-adenosyl-L-methionine = precorrin-2 + 2 S-adenosyl-L-homocysteine + H(+). It catalyses the reaction precorrin-2 + NAD(+) = sirohydrochlorin + NADH + 2 H(+). The catalysed reaction is siroheme + 2 H(+) = sirohydrochlorin + Fe(2+). It functions in the pathway cofactor biosynthesis; adenosylcobalamin biosynthesis; precorrin-2 from uroporphyrinogen III: step 1/1. Its pathway is cofactor biosynthesis; adenosylcobalamin biosynthesis; sirohydrochlorin from precorrin-2: step 1/1. It participates in porphyrin-containing compound metabolism; siroheme biosynthesis; precorrin-2 from uroporphyrinogen III: step 1/1. The protein operates within porphyrin-containing compound metabolism; siroheme biosynthesis; siroheme from sirohydrochlorin: step 1/1. It functions in the pathway porphyrin-containing compound metabolism; siroheme biosynthesis; sirohydrochlorin from precorrin-2: step 1/1. Multifunctional enzyme that catalyzes the SAM-dependent methylations of uroporphyrinogen III at position C-2 and C-7 to form precorrin-2 via precorrin-1. Then it catalyzes the NAD-dependent ring dehydrogenation of precorrin-2 to yield sirohydrochlorin. Finally, it catalyzes the ferrochelation of sirohydrochlorin to yield siroheme. The sequence is that of Siroheme synthase from Xylella fastidiosa (strain M23).